A 374-amino-acid chain; its full sequence is DNA-directed RNA polymerase subunit alpha (374 aa).

The segment at 1-257 (MSDNAHNLLY…KHFSIFENMD (257 aa)) is alpha N-terminal domain (alpha-NTD). Residues 274–374 (KDDILHKLIL…EKIRAKNIKG (101 aa)) form an alpha C-terminal domain (alpha-CTD) region.

Belongs to the RNA polymerase alpha chain family. In terms of assembly, homodimer. The RNAP catalytic core consists of 2 alpha, 1 beta, 1 beta' and 1 omega subunit. When a sigma factor is associated with the core the holoenzyme is formed, which can initiate transcription.

It catalyses the reaction RNA(n) + a ribonucleoside 5'-triphosphate = RNA(n+1) + diphosphate. In terms of biological role, DNA-dependent RNA polymerase catalyzes the transcription of DNA into RNA using the four ribonucleoside triphosphates as substrates. This is DNA-directed RNA polymerase subunit alpha from Chlamydia pneumoniae (Chlamydophila pneumoniae).